The primary structure comprises 303 residues: Small ribosomal subunit protein uS2 (303 aa).

A disordered region spans residues 267–303; sequence AESLSMAEEPAPPSQRKGPASETAEPVAEPAVTESGS.

It belongs to the universal ribosomal protein uS2 family.

The polypeptide is Small ribosomal subunit protein uS2 (Solibacter usitatus (strain Ellin6076)).